Here is a 174-residue protein sequence, read N- to C-terminus: Chaperonin-like RBCX protein 1, chloroplastic (174 aa).

The N-terminal 45 residues, methionine 1–asparagine 45, are a transit peptide targeting the chloroplast.

Belongs to the RbcX family. In terms of assembly, homodimer. Interacts with rbcL, atpB and THI1.

The protein resides in the plastid. It localises to the chloroplast. Functionally, chaperone involved in RuBisCO assembly process. This chain is Chaperonin-like RBCX protein 1, chloroplastic, found in Arabidopsis thaliana (Mouse-ear cress).